A 237-amino-acid polypeptide reads, in one-letter code: Ribosomal RNA small subunit methyltransferase G (237 aa).

S-adenosyl-L-methionine is bound by residues G78, F83, 129–130 (AE), and R148. A disordered region spans residues 216–237 (SKKKETPNKYPRKAGTPNKKPL).

Belongs to the methyltransferase superfamily. RNA methyltransferase RsmG family.

The protein resides in the cytoplasm. Specifically methylates the N7 position of a guanine in 16S rRNA. The polypeptide is Ribosomal RNA small subunit methyltransferase G (Streptococcus agalactiae serotype III (strain NEM316)).